Consider the following 360-residue polypeptide: MKDSIRSKLETLAERQQELTALLAEPEIASAQKKFRELSQEYAQLEPVIGCFRDFEQAQSVLNESKALLQDQDPELRVLAQEEIAAAEKKLERLDRELHTLLLPSDPNDKRNIFLEIRAGTGGDEAALFASDLLRMYLRYAEQRGWRTEIMGDSPGEHGGHKEIIVRIVGAGAYSRLKFESGGHRVQRVPQTESQGRIHTSACTVAIMPEAEEIDDIDINPADLRVDTFRASGAGGQHVNKTDSAIRITHLASGIVVECQDERSQHKNRARAMSLLRTKLKSEEEAKLVAEETATRRSLIGSGDRSERIRTYNFPQGRVTDHRINLTLYKLDEILQGNLDAIIDPLVAEHQADQLAALSD.

Residue glutamine 237 is modified to N5-methylglutamine.

This sequence belongs to the prokaryotic/mitochondrial release factor family. Methylated by PrmC. Methylation increases the termination efficiency of RF1.

It localises to the cytoplasm. In terms of biological role, peptide chain release factor 1 directs the termination of translation in response to the peptide chain termination codons UAG and UAA. In Nitrosococcus oceani (strain ATCC 19707 / BCRC 17464 / JCM 30415 / NCIMB 11848 / C-107), this protein is Peptide chain release factor 1.